We begin with the raw amino-acid sequence, 152 residues long: Small ribosomal subunit protein uS19u (152 aa).

It belongs to the universal ribosomal protein uS19 family.

It localises to the cytoplasm. This Arabidopsis thaliana (Mouse-ear cress) protein is Small ribosomal subunit protein uS19u (RPS15A).